The following is a 113-amino-acid chain: MEIEKNYRINSLFEFYQPLLTKKQNDYLELYYGDDYSLGEIAENFHVSRQAVYDNIKRTESILEDYEAKLHLYAEFQVRNQQADRIQRYVRENYPDDATLNHLVNHLESLEEE.

The protein belongs to the UPF0122 family.

Functionally, might take part in the signal recognition particle (SRP) pathway. This is inferred from the conservation of its genetic proximity to ftsY/ffh. May be a regulatory protein. This is UPF0122 protein Lreu_1156 from Limosilactobacillus reuteri (strain DSM 20016) (Lactobacillus reuteri).